The sequence spans 188 residues: Adenine phosphoribosyltransferase (188 aa).

This sequence belongs to the purine/pyrimidine phosphoribosyltransferase family. Homodimer.

The protein localises to the cytoplasm. It catalyses the reaction AMP + diphosphate = 5-phospho-alpha-D-ribose 1-diphosphate + adenine. It participates in purine metabolism; AMP biosynthesis via salvage pathway; AMP from adenine: step 1/1. Its function is as follows. Catalyzes a salvage reaction resulting in the formation of AMP, that is energically less costly than de novo synthesis. This is Adenine phosphoribosyltransferase from Paraburkholderia phymatum (strain DSM 17167 / CIP 108236 / LMG 21445 / STM815) (Burkholderia phymatum).